The primary structure comprises 310 residues: Flavin-dependent trigonelline monooxygenase, reductase component (310 aa).

Residues 40-43 (TANS), 57-63 (SIAKTSS), 90-91 (FA), and R97 each bind FMN.

This sequence belongs to the non-flavoprotein flavin reductase family. Homodimer. The trigonelline monooxygenase is composed of a reductase component TgnA and an oxygenase component TgnB.

It catalyses the reaction a reduced flavin + NAD(+) = an oxidized flavin + NADH + 2 H(+). It carries out the reaction FADH2 + NAD(+) = FAD + NADH + 2 H(+). The enzyme catalyses FMNH2 + NAD(+) = FMN + NADH + 2 H(+). Its activity is regulated as follows. Maximal reductase activity is achieved only upon trigonelline (TG) binding to the reductase component before interaction with NADH. It seems that TgnA undergoes an allosteric transition upon trigonelline (TG) binding accounting for the positive cooperativity toward NADH oxidation. Functionally, involved in the degradation of the pyridine ring of trigonelline (TG; N-methylnicotinate) into succinate and methylamine as carbon and nitrogen sources, respectively. TgnA catalyzes the reduction of flavin (FMN or FAD) by NADH and supplies the reduced flavin to the oxygenase component TgnB. The polypeptide is Flavin-dependent trigonelline monooxygenase, reductase component (Acinetobacter baylyi (strain ATCC 33305 / BD413 / ADP1)).